Reading from the N-terminus, the 376-residue chain is MASWDIFCSVVDNYGDIGVTWRLARQLAAEHGQAVRLWVDEPQAFARICPRADPVAHVQCLDGVEVRAWGRPWAPVAAADVVIEAFACELPEAHRQAMRERKRPSLWLNLEYLSAEEWIGSCHALPSLQACGLSKYFFFPGFREPSGGLLREAGLLERRRRFQASVSAQDEFLASLGVRRKVGERLISLFAYENPALPGWLEQLRDARQPSLLLVPEGRVLADVADWLRVATLAVGDVHVRDALRVQVLPFMAQDDYDRLLWCCDLNAVRGEDSFVRAQWAGRPLLWHIYRQEEETHLAKLEAFLELYCAGLPADLAENLRTFWLAWNAGGGLAGAWEGLERQLPEWRREAQRWADEQGMRPDLAARLVQFYADWL.

DTDP-beta-L-rhamnose contacts are provided by residues 13–16, Y192, 252–254, and 270–274; these read NYGD, MAQ, and RGEDS. 14 to 15 lines the dTDP pocket; sequence YG. D16 serves as the catalytic Proton acceptor. Residues Y192, 252-254, and 270-274 each bind dTDP; these read MAQ and RGEDS. E272 is an active-site residue.

This sequence belongs to the glycosyltransferase 104 family.

It carries out the reaction dTDP-beta-L-rhamnose + L-arginyl-[protein] = N(omega)-(alpha-L-rhamnosyl)-L-arginyl-[protein] + dTDP + H(+). Its function is as follows. Protein-arginine rhamnosyltransferase that catalyzes the transfer of a single rhamnose to elongation factor P (EF-P) on 'Lys-32', a modification required for EF-P-dependent rescue of polyproline stalled ribosomes. In Pseudomonas aeruginosa (strain ATCC 15692 / DSM 22644 / CIP 104116 / JCM 14847 / LMG 12228 / 1C / PRS 101 / PAO1), this protein is Protein-arginine rhamnosyltransferase.